The sequence spans 394 residues: NAD(P)H-quinone oxidoreductase subunit H (394 aa).

This sequence belongs to the complex I 49 kDa subunit family. In terms of assembly, NDH-1 can be composed of about 15 different subunits; different subcomplexes with different compositions have been identified which probably have different functions.

The protein localises to the cellular thylakoid membrane. The catalysed reaction is a plastoquinone + NADH + (n+1) H(+)(in) = a plastoquinol + NAD(+) + n H(+)(out). It carries out the reaction a plastoquinone + NADPH + (n+1) H(+)(in) = a plastoquinol + NADP(+) + n H(+)(out). Functionally, NDH-1 shuttles electrons from an unknown electron donor, via FMN and iron-sulfur (Fe-S) centers, to quinones in the respiratory and/or the photosynthetic chain. The immediate electron acceptor for the enzyme in this species is believed to be plastoquinone. Couples the redox reaction to proton translocation, and thus conserves the redox energy in a proton gradient. Cyanobacterial NDH-1 also plays a role in inorganic carbon-concentration. In Prochlorococcus marinus (strain MIT 9303), this protein is NAD(P)H-quinone oxidoreductase subunit H.